Consider the following 240-residue polypeptide: UDP-2,3-diacylglucosamine hydrolase (240 aa).

Residues Asp-7, His-9, Asp-40, Asn-78, and His-113 each coordinate Mn(2+). 78 to 79 (NR) lines the substrate pocket. The substrate site is built by Asp-121, Ser-159, Thr-163, Lys-166, and His-194. The Mn(2+) site is built by His-194 and His-196.

Belongs to the LpxH family. Mn(2+) is required as a cofactor.

It is found in the cell inner membrane. It carries out the reaction UDP-2-N,3-O-bis[(3R)-3-hydroxytetradecanoyl]-alpha-D-glucosamine + H2O = 2-N,3-O-bis[(3R)-3-hydroxytetradecanoyl]-alpha-D-glucosaminyl 1-phosphate + UMP + 2 H(+). Its pathway is glycolipid biosynthesis; lipid IV(A) biosynthesis; lipid IV(A) from (3R)-3-hydroxytetradecanoyl-[acyl-carrier-protein] and UDP-N-acetyl-alpha-D-glucosamine: step 4/6. Functionally, hydrolyzes the pyrophosphate bond of UDP-2,3-diacylglucosamine to yield 2,3-diacylglucosamine 1-phosphate (lipid X) and UMP by catalyzing the attack of water at the alpha-P atom. Involved in the biosynthesis of lipid A, a phosphorylated glycolipid that anchors the lipopolysaccharide to the outer membrane of the cell. The protein is UDP-2,3-diacylglucosamine hydrolase of Pseudomonas entomophila (strain L48).